Here is a 171-residue protein sequence, read N- to C-terminus: MTRQNAYTREDLLACSRGELFGPGNAQLPAPNMLMIDRIVHISETGGKHGKGEIVAELDINPDLWFFSCHFEGDPVMPGCLGLDAMWQLVGFYLGWQGNPGRGRALGSGEVKFFGQVLPTAKKVTYNIHIKRTINRSLILGIADGSVSVDGREIYSAEGLRVGLFTSTDSF.

H70 is a catalytic residue.

The protein belongs to the thioester dehydratase family. FabA subfamily. As to quaternary structure, homodimer.

The protein resides in the cytoplasm. The catalysed reaction is a (3R)-hydroxyacyl-[ACP] = a (2E)-enoyl-[ACP] + H2O. It catalyses the reaction (3R)-hydroxydecanoyl-[ACP] = (2E)-decenoyl-[ACP] + H2O. The enzyme catalyses (2E)-decenoyl-[ACP] = (3Z)-decenoyl-[ACP]. It participates in lipid metabolism; fatty acid biosynthesis. Necessary for the introduction of cis unsaturation into fatty acids. Catalyzes the dehydration of (3R)-3-hydroxydecanoyl-ACP to E-(2)-decenoyl-ACP and then its isomerization to Z-(3)-decenoyl-ACP. Can catalyze the dehydratase reaction for beta-hydroxyacyl-ACPs with saturated chain lengths up to 16:0, being most active on intermediate chain length. The protein is 3-hydroxydecanoyl-[acyl-carrier-protein] dehydratase of Ectopseudomonas mendocina (strain ymp) (Pseudomonas mendocina).